A 200-amino-acid chain; its full sequence is Lipopolysaccharide core heptose(II)-phosphate phosphatase (200 aa).

Residues Met1–Ala25 form the signal peptide.

This sequence belongs to the phosphoglycerate mutase family. Ais subfamily.

It localises to the periplasm. Its pathway is bacterial outer membrane biogenesis; lipopolysaccharide metabolism. Catalyzes the dephosphorylation of heptose(II) of the outer membrane lipopolysaccharide core. In Escherichia coli O9:H4 (strain HS), this protein is Lipopolysaccharide core heptose(II)-phosphate phosphatase.